Consider the following 159-residue polypeptide: MNINIVTIGKLKEKYLKQGIEEYKKRLSAYAKIDIIELPDEKAPENLSDQDMKIVKDKEGERILAKISPDTHVIALAIEGKMKTSEELADTIDKLATYGKSKITFVIGGSLGLSDAVMKRADEKLSFSKMTFPHQLMRLILVEQIYRAFRINRGEPYHK.

Residues L76, G108, and F127–F132 each bind S-adenosyl-L-methionine.

It belongs to the RNA methyltransferase RlmH family. Homodimer.

It is found in the cytoplasm. It catalyses the reaction pseudouridine(1915) in 23S rRNA + S-adenosyl-L-methionine = N(3)-methylpseudouridine(1915) in 23S rRNA + S-adenosyl-L-homocysteine + H(+). Functionally, specifically methylates the pseudouridine at position 1915 (m3Psi1915) in 23S rRNA. This Bacillus velezensis (strain DSM 23117 / BGSC 10A6 / LMG 26770 / FZB42) (Bacillus amyloliquefaciens subsp. plantarum) protein is Ribosomal RNA large subunit methyltransferase H.